The primary structure comprises 272 residues: Glycerol-3-phosphate acyltransferase (272 aa).

The next 6 membrane-spanning stretches (helical) occupy residues 9-29 (IIIL…GILI), 60-80 (AIVM…CLLI), 99-119 (VIIY…CFYF), 149-169 (ASIS…ICLI), 173-193 (VSLA…IPHL), and 226-246 (LNWW…VLVI).

Belongs to the PlsY family. In terms of assembly, probably interacts with PlsX.

It is found in the cell membrane. The enzyme catalyses an acyl phosphate + sn-glycerol 3-phosphate = a 1-acyl-sn-glycero-3-phosphate + phosphate. It participates in lipid metabolism; phospholipid metabolism. Its function is as follows. Catalyzes the transfer of an acyl group from acyl-phosphate (acyl-PO(4)) to glycerol-3-phosphate (G3P) to form lysophosphatidic acid (LPA). This enzyme utilizes acyl-phosphate as fatty acyl donor, but not acyl-CoA or acyl-ACP. This is Glycerol-3-phosphate acyltransferase from Malacoplasma penetrans (strain HF-2) (Mycoplasma penetrans).